Reading from the N-terminus, the 613-residue chain is Myrcene synthase, chloroplastic (613 aa).

Residues 1–46 constitute a chloroplast transit peptide; that stretch reads MQCMAVHQFAPLLSLLNCSRISSDFGRLFTPKTSTKSRSSTCHPIQ. 3 residues coordinate (2E)-geranyl diphosphate: Arg324, Asp361, and Asp365. Mg(2+) contacts are provided by Asp361 and Asp365. The short motif at 361-365 is the DDXXD motif element; that stretch reads DDIYD. The chain crosses the membrane as a helical span at residues 455–475; sequence IEMAWLSIGGPVILVHAYFCF. Positions 503 and 506 each coordinate (2E)-geranyl diphosphate. Mg(2+)-binding residues include Asp506, Thr510, and Glu514.

It belongs to the terpene synthase family. Tpsb subfamily. The cofactor is Mg(2+). Mn(2+) is required as a cofactor. In terms of tissue distribution, expressed in trichomes.

It localises to the plastid. It is found in the chloroplast membrane. The enzyme catalyses (2E)-geranyl diphosphate = beta-myrcene + diphosphate. It participates in secondary metabolite biosynthesis; terpenoid biosynthesis. In terms of biological role, monoterpene synthase that catalyzes the formation of myrcene. Can use geranyl diphosphate as substrate, but not farnesyl diphosphate or geranylgeranyl diphosphate. The protein is Myrcene synthase, chloroplastic of Humulus lupulus (European hop).